A 133-amino-acid chain; its full sequence is Small ribosomal subunit protein uS11 (133 aa).

The protein belongs to the universal ribosomal protein uS11 family. In terms of assembly, part of the 30S ribosomal subunit. Interacts with proteins S7 and S18. Binds to IF-3.

Functionally, located on the platform of the 30S subunit, it bridges several disparate RNA helices of the 16S rRNA. Forms part of the Shine-Dalgarno cleft in the 70S ribosome. This Methylibium petroleiphilum (strain ATCC BAA-1232 / LMG 22953 / PM1) protein is Small ribosomal subunit protein uS11.